The sequence spans 426 residues: Glutamate-1-semialdehyde 2,1-aminomutase (426 aa).

At Lys-265 the chain carries N6-(pyridoxal phosphate)lysine.

The protein belongs to the class-III pyridoxal-phosphate-dependent aminotransferase family. HemL subfamily. Homodimer. It depends on pyridoxal 5'-phosphate as a cofactor.

The protein localises to the cytoplasm. It carries out the reaction (S)-4-amino-5-oxopentanoate = 5-aminolevulinate. Its pathway is porphyrin-containing compound metabolism; protoporphyrin-IX biosynthesis; 5-aminolevulinate from L-glutamyl-tRNA(Glu): step 2/2. In Escherichia fergusonii (strain ATCC 35469 / DSM 13698 / CCUG 18766 / IAM 14443 / JCM 21226 / LMG 7866 / NBRC 102419 / NCTC 12128 / CDC 0568-73), this protein is Glutamate-1-semialdehyde 2,1-aminomutase.